A 298-amino-acid chain; its full sequence is Protoheme IX farnesyltransferase (298 aa).

The next 9 membrane-spanning stretches (helical) occupy residues 23–43 (LLLLFTMYTAYIVGGGLGKPY), 47–67 (LVVLTLGFITIAAVTALNMYF), 93–113 (VFIATVAATIVSVILAWRIIN), 115–135 (HFALAIVIGFLFDIVAYTYLL), 143–163 (IIAGAVAGGAPALGGWAAAAG), 169–189 (ALLFSLIVATWVPSHIWFLAT), 211–231 (IAVASGIGLGSLVMGYSIVGL), 236–256 (VIGTVSLIVGVIAAIAIFHLA), and 278–298 (MMLGLVFLVMMLEKVVSYIIS).

Belongs to the UbiA prenyltransferase family. Protoheme IX farnesyltransferase subfamily.

It is found in the cell membrane. It catalyses the reaction heme b + (2E,6E)-farnesyl diphosphate + H2O = Fe(II)-heme o + diphosphate. Its pathway is porphyrin-containing compound metabolism; heme O biosynthesis; heme O from protoheme: step 1/1. Functionally, converts heme B (protoheme IX) to heme O by substitution of the vinyl group on carbon 2 of heme B porphyrin ring with a hydroxyethyl farnesyl side group. This chain is Protoheme IX farnesyltransferase, found in Hyperthermus butylicus (strain DSM 5456 / JCM 9403 / PLM1-5).